Reading from the N-terminus, the 730-residue chain is Actin filament-associated protein 1 (730 aa).

N-acetylmethionine is present on Met-1. A disordered region spans residues 47–91; sequence KDHAQKQETANSLPAPPQMPLPEIPQPWLPPDSGPPPLPTSSLPE. The segment covering 60 to 85 has biased composition (pro residues); it reads PAPPQMPLPEIPQPWLPPDSGPPPLP. An SH3-binding motif is present at residues 71–74; the sequence is PQPW. Residues 94-97 carry the SH2-binding 1 motif; that stretch reads YEEA. A disordered region spans residues 119-140; the sequence is SSSYESYDEEEEDGKGKKTRHQ. The PH 1 domain maps to 153–249; sequence DAKICAFLLR…WLKVIKEAYS (97 aa). The segment at 252-292 is disordered; sequence SGPVDSECPPPPSSPVHKAELEKKLSSERPSSDGEGVVENG. A compositionally biased stretch (basic and acidic residues) spans 268–283; the sequence is HKAELEKKLSSERPSS. Residues Ser-282 and Ser-283 each carry the phosphoserine modification. Positions 347–441 constitute a PH 2 domain; it reads DVPTCGYLNV…WIGILLAETG (95 aa). The short motif at 451–456 is the SH2-binding 2 element; it reads YDYIDV. Positions 512–537 are disordered; it reads KGKKPPVASNGVTGKGKTLSSQPKKA. Ser-548 is modified (phosphoserine). Positions 557–648 form a coiled coil; it reads KNRVEADAKR…VKESLKKALA (92 aa). The interval 594–637 is interaction with F-actin; it reads DLRAAIEVNAGRKPQAILEEKLKQLEEECRQKEAERVSLELELT. Residues Ser-664, Ser-665, and Ser-668 each carry the phosphoserine modification. Position 675 is a phosphothreonine (Thr-675). 2 positions are modified to phosphoserine: Ser-679 and Ser-687.

As to quaternary structure, monomer and homomultimer. Interacts via its C-terminus with F-actin; probably involving AFAP1 multimers. Interacts with activated SRC SH3-SH2 domains. Interacts via its PH 1 domain with PRKCA, PRKCB and PRKCI. Post-translationally, phosphorylated on tyrosine residues by SRC. As to expression, low expression in normal breast epithelial cell line MCF-10A and in tumorigenic breast cancer cell lines MCF-7, T-47D and ZR-75-1. Highly expressed in the invasive breast cancer cell lines MDA-MB-231 and MDA-MB-435. Overexpressed in prostate carcinoma.

The protein resides in the cytoplasm. The protein localises to the cytoskeleton. Its subcellular location is the stress fiber. Functionally, can cross-link actin filaments into both network and bundle structures. May modulate changes in actin filament integrity and induce lamellipodia formation. May function as an adapter molecule that links other proteins, such as SRC and PKC to the actin cytoskeleton. Seems to play a role in the development and progression of prostate adenocarcinoma by regulating cell-matrix adhesions and migration in the cancer cells. The chain is Actin filament-associated protein 1 (AFAP1) from Homo sapiens (Human).